The sequence spans 359 residues: MKFAWIRPNGTWNDRKEAIVDSLESGFDHIMDLDNAETIKKLGSVTIISDKEDSDITLLGLNNKITMADIKKAQESGKEVAAYVEINNKDDELLVSKLGTVADYVILKGKNWKVIPLENIIASLQNRTSKIIVDVPNYEEAKLALETMEHGSDGVLLSSNDGNEIRKLGALIEKVSKESYDLKAATVTKVESVGIGDRVCVDTCSMMNVGDGMLVGSFASGLFLVHSETLESEYVASRPFRVNAGPVHAYVMTPENKTRYLSELEAGDEVVTLNSKGEANTVIVGRVKIEKRPLLLIEAKYKNSRIRTLVQNAETIRLVNDKGEPISVSKLKVGDKVLAYFSEAARHFGMAIEEQIIEK.

This sequence belongs to the archaeal-type DHQ synthase family.

It carries out the reaction 2-amino-2,3,7-trideoxy-D-lyxo-hept-6-ulosonate + NAD(+) + H2O = 3-dehydroquinate + NH4(+) + NADH + H(+). In terms of biological role, catalyzes the oxidative deamination and cyclization of 2-amino-3,7-dideoxy-D-threo-hept-6-ulosonic acid (ADH) to yield 3-dehydroquinate (DHQ), which is fed into the canonical shikimic pathway of aromatic amino acid biosynthesis. The chain is 3-dehydroquinate synthase from Methanosphaera stadtmanae (strain ATCC 43021 / DSM 3091 / JCM 11832 / MCB-3).